Reading from the N-terminus, the 199-residue chain is DnaJ homolog subfamily C member 5B (199 aa).

S14 is modified (phosphoserine). In terms of domain architecture, J spans 19 to 84 (ALYEILGLHK…SKRSIYDKYG (66 aa)).

In terms of assembly, interacts with the chaperone complex consisting of HSC70 and SGTA. Palmitoylated. Palmitoylation is not required for membrane association. As to expression, testis specific.

The protein resides in the membrane. The polypeptide is DnaJ homolog subfamily C member 5B (DNAJC5B) (Homo sapiens (Human)).